The chain runs to 178 residues: Interleukin-10 (178 aa).

An N-terminal signal peptide occupies residues M1–A18. Disulfide bonds link C30/C126 and C80/C132. An N-linked (GlcNAc...) asparagine glycan is attached at N134.

The protein belongs to the IL-10 family. Homodimer. Interacts with IL10RA and IL10RB.

Its subcellular location is the secreted. Major immune regulatory cytokine that acts on many cells of the immune system where it has profound anti-inflammatory functions, limiting excessive tissue disruption caused by inflammation. Mechanistically, IL10 binds to its heterotetrameric receptor comprising IL10RA and IL10RB leading to JAK1 and STAT2-mediated phosphorylation of STAT3. In turn, STAT3 translocates to the nucleus where it drives expression of anti-inflammatory mediators. Targets antigen-presenting cells (APCs) such as macrophages and monocytes and inhibits their release of pro-inflammatory cytokines including granulocyte-macrophage colony-stimulating factor /GM-CSF, granulocyte colony-stimulating factor/G-CSF, IL-1 alpha, IL-1 beta, IL-6, IL-8 and TNF-alpha. Also interferes with antigen presentation by reducing the expression of MHC-class II and co-stimulatory molecules, thereby inhibiting their ability to induce T cell activation. In addition, controls the inflammatory response of macrophages by reprogramming essential metabolic pathways including mTOR signaling. In Papio hamadryas (Hamadryas baboon), this protein is Interleukin-10 (IL10).